Here is a 166-residue protein sequence, read N- to C-terminus: Crossover junction endodeoxyribonuclease RuvC (166 aa).

Active-site residues include aspartate 7, glutamate 67, and aspartate 139. Mg(2+) is bound by residues aspartate 7, glutamate 67, and aspartate 139.

The protein belongs to the RuvC family. In terms of assembly, homodimer which binds Holliday junction (HJ) DNA. The HJ becomes 2-fold symmetrical on binding to RuvC with unstacked arms; it has a different conformation from HJ DNA in complex with RuvA. In the full resolvosome a probable DNA-RuvA(4)-RuvB(12)-RuvC(2) complex forms which resolves the HJ. The cofactor is Mg(2+).

It localises to the cytoplasm. It carries out the reaction Endonucleolytic cleavage at a junction such as a reciprocal single-stranded crossover between two homologous DNA duplexes (Holliday junction).. Functionally, the RuvA-RuvB-RuvC complex processes Holliday junction (HJ) DNA during genetic recombination and DNA repair. Endonuclease that resolves HJ intermediates. Cleaves cruciform DNA by making single-stranded nicks across the HJ at symmetrical positions within the homologous arms, yielding a 5'-phosphate and a 3'-hydroxyl group; requires a central core of homology in the junction. The consensus cleavage sequence is 5'-(A/T)TT(C/G)-3'. Cleavage occurs on the 3'-side of the TT dinucleotide at the point of strand exchange. HJ branch migration catalyzed by RuvA-RuvB allows RuvC to scan DNA until it finds its consensus sequence, where it cleaves and resolves the cruciform DNA. The chain is Crossover junction endodeoxyribonuclease RuvC from Paramagnetospirillum magneticum (strain ATCC 700264 / AMB-1) (Magnetospirillum magneticum).